The sequence spans 785 residues: Endonuclease MutS2 (785 aa).

334-341 is an ATP binding site; sequence GPNTGGKT. The Smr domain maps to 710–785; the sequence is LDLRGYNVED…GVGATIAELK (76 aa).

It belongs to the DNA mismatch repair MutS family. MutS2 subfamily. As to quaternary structure, homodimer. Binds to stalled ribosomes, contacting rRNA.

Endonuclease that is involved in the suppression of homologous recombination and thus may have a key role in the control of bacterial genetic diversity. In terms of biological role, acts as a ribosome collision sensor, splitting the ribosome into its 2 subunits. Detects stalled/collided 70S ribosomes which it binds and splits by an ATP-hydrolysis driven conformational change. Acts upstream of the ribosome quality control system (RQC), a ribosome-associated complex that mediates the extraction of incompletely synthesized nascent chains from stalled ribosomes and their subsequent degradation. Probably generates substrates for RQC. In Brevibacillus brevis (strain 47 / JCM 6285 / NBRC 100599), this protein is Endonuclease MutS2.